A 497-amino-acid polypeptide reads, in one-letter code: Serine carboxypeptidase-like 20 (497 aa).

The first 29 residues, 1–29 (MSIITMVWLMKVFVFVTLLSLVFVITESA), serve as a signal peptide directing secretion. 3 disulfides stabilise this stretch: cysteine 90-cysteine 386, cysteine 254-cysteine 266, and cysteine 289-cysteine 353. Residues asparagine 111 and asparagine 146 are each glycosylated (N-linked (GlcNAc...) asparagine). Residue serine 186 is part of the active site. A glycan (N-linked (GlcNAc...) asparagine) is linked at asparagine 249. Asparagine 405 carries N-linked (GlcNAc...) asparagine glycosylation. The active site involves aspartate 421. N-linked (GlcNAc...) asparagine glycosylation is present at asparagine 463. Histidine 474 is an active-site residue. A Microbody targeting signal motif is present at residues 495–497 (SKI).

The protein belongs to the peptidase S10 family. In terms of tissue distribution, ubiquitous.

The protein localises to the secreted. Probable carboxypeptidase. The chain is Serine carboxypeptidase-like 20 (SCPL20) from Arabidopsis thaliana (Mouse-ear cress).